Here is a 79-residue protein sequence, read N- to C-terminus: Small ribosomal subunit protein bS18 (79 aa).

It belongs to the bacterial ribosomal protein bS18 family. Part of the 30S ribosomal subunit. Forms a tight heterodimer with protein bS6.

Binds as a heterodimer with protein bS6 to the central domain of the 16S rRNA, where it helps stabilize the platform of the 30S subunit. In Streptococcus pneumoniae (strain Hungary19A-6), this protein is Small ribosomal subunit protein bS18.